Reading from the N-terminus, the 42-residue chain is Photosystem I reaction center subunit IX (42 aa).

The helical transmembrane segment at 7–27 (FLSSAPVLIMALLTFTAGILI) threads the bilayer.

This sequence belongs to the PsaJ family.

The protein resides in the cellular thylakoid membrane. Functionally, may help in the organization of the PsaE and PsaF subunits. This is Photosystem I reaction center subunit IX from Microcystis aeruginosa (strain NIES-843 / IAM M-2473).